Reading from the N-terminus, the 605-residue chain is MAIYQVIPYGLPVPPNTPHAILVSLPTWNDTVTCIEGEDAETRLSGYPRFFIQVAIRKLASLMERKYGLDGERCMLFPSYRVAEQCRLFVQASFSGVRVVSLLVCQEDNKNARIVECKEDTGLSMQPASENHLHIVLFPTDALPVAKLFWQFTGTGISSRFADHWLSTLPDDVVRTNGISGSTSVQYLTNKSPGDYSVGLELTPLPDAASAKYVLRQRIAGALNVYDRQGGPYAVQENLQVGPNSHGIADVSENDVYLFPTGMCAIWNAHRLSLAVRSAEKSVCFGFVYCDTLKVLEKWGPGCHFFPEGNDYDIDQLEVILEQESARDSTKPPILALYTEFPSNPLLRSPNLPRLRALADKYDFLMVIDDTLGNFVNVDVLPYADIVVTSLSKIFSGSANVMGGSLVLNTNGHHYTALAAYMTAHYEDTYYDEDAICMEQNSRDLQQRIKIIDTNAEALCDFLRSHSVAAGAAKSVIKEVFYPKYKTPENYERCRKTVSNHNASLSSSNEVGGYGGLFSITFISNAASRAFYESLDCFRAPSLGTNFTLAVLYTILAHHDELEWAAQCGVEEGLVRVSVGMENTETLLKVFEVALSTAKKAVATA.

Y289 is a binding site for substrate. Position 393 is an N6-(pyridoxal phosphate)lysine (K393).

It belongs to the trans-sulfuration enzymes family. Pyridoxal 5'-phosphate serves as cofactor.

Its pathway is secondary metabolite biosynthesis. Its function is as follows. Cystathionine gamma-synthase-like enzyme; part of the gene cluster that mediates the biosynthesis of the psychoactive metabolites ibotenic acid and muscimol. The first committed step is glutamate hydroxylation by the 2-oxoglutarate-dependent dioxygenase iboH, and the last step is decarboxylation of ibotenic acid to muscimol by the decarboxylase iboD. The order of the intermediate reactions is somewhat ambiguous. IboA likely activates the carboxylic acid at position 5 to introduce an amide bond, and the flavin monooxygenase iboF generates the N-O bond. There are several options for the latter step. One option is that iboF directly hydroxylates the amide nitrogen formed by iboA to produce a hydroxamic acid species. Another option is that iboF hydroxylates an external N-containing compound, whose resulting N-O bond is subsequently introduced into the hydroxyglutamate scaffold. The paralogous PLP-dependent cystathionine gamma-synthase-like enzymes iboG1 and iboG2 are likely involved in substitution of the OH group at position 3 by the O-N moiety. The first cyclic intermediate is most probably tricholomic acid which is likely desaturated to ibotenic acid by the cytochrome P450 monooxygenase iboC. This is Cystathionine gamma-synthase-like enzyme iboG1 (iboG1) from Amanita muscaria (strain Koide BX008).